A 518-amino-acid chain; its full sequence is Glutamate--cysteine ligase (518 aa).

It belongs to the glutamate--cysteine ligase type 1 family. Type 1 subfamily.

The enzyme catalyses L-cysteine + L-glutamate + ATP = gamma-L-glutamyl-L-cysteine + ADP + phosphate + H(+). Its pathway is sulfur metabolism; glutathione biosynthesis; glutathione from L-cysteine and L-glutamate: step 1/2. This is Glutamate--cysteine ligase from Klebsiella pneumoniae (strain 342).